The following is a 243-amino-acid chain: Glutathione S-transferase omega-2 (243 aa).

The GST N-terminal domain occupies 22–101 (GLIRIYSMRF…YLDDAYPGRK (80 aa)). Cys-32 serves as the catalytic Nucleophile. Glutathione contacts are provided by residues Lys-59, Ile-72, and 85 to 86 (ES). The GST C-terminal domain occupies 106-231 (DPYERARQKM…IFQGFLNLYF (126 aa)).

The protein belongs to the GST superfamily. Omega family. As to expression, expressed in a range of tissues, including the liver, kidney, skeletal muscle and prostate. Strongest expression in the testis.

It catalyses the reaction RX + glutathione = an S-substituted glutathione + a halide anion + H(+). It carries out the reaction L-dehydroascorbate + 2 glutathione = glutathione disulfide + L-ascorbate. The enzyme catalyses methylarsonate + 2 glutathione + H(+) = methylarsonous acid + glutathione disulfide + H2O. Exhibits glutathione-dependent thiol transferase activity. Has high dehydroascorbate reductase activity and may contribute to the recycling of ascorbic acid. Participates in the biotransformation of inorganic arsenic and reduces monomethylarsonic acid (MMA). The polypeptide is Glutathione S-transferase omega-2 (GSTO2) (Homo sapiens (Human)).